The sequence spans 199 residues: Recombination protein RecR (199 aa).

The C4-type zinc-finger motif lies at Cys-58–Cys-73. Positions Leu-81 to Pro-176 constitute a Toprim domain.

Belongs to the RecR family.

Its function is as follows. May play a role in DNA repair. It seems to be involved in an RecBC-independent recombinational process of DNA repair. It may act with RecF and RecO. In Alkaliphilus oremlandii (strain OhILAs) (Clostridium oremlandii (strain OhILAs)), this protein is Recombination protein RecR.